A 279-amino-acid polypeptide reads, in one-letter code: Tryptophan synthase alpha chain (279 aa).

Residues Glu-50 and Asp-61 each act as proton acceptor in the active site.

This sequence belongs to the TrpA family. Tetramer of two alpha and two beta chains.

The catalysed reaction is (1S,2R)-1-C-(indol-3-yl)glycerol 3-phosphate + L-serine = D-glyceraldehyde 3-phosphate + L-tryptophan + H2O. It participates in amino-acid biosynthesis; L-tryptophan biosynthesis; L-tryptophan from chorismate: step 5/5. In terms of biological role, the alpha subunit is responsible for the aldol cleavage of indoleglycerol phosphate to indole and glyceraldehyde 3-phosphate. The polypeptide is Tryptophan synthase alpha chain (Allorhizobium ampelinum (strain ATCC BAA-846 / DSM 112012 / S4) (Agrobacterium vitis (strain S4))).